Here is a 248-residue protein sequence, read N- to C-terminus: Small ribosomal subunit protein eS1 (248 aa).

A disordered region spans residues 1–21 (MAVGKDKRISKGKKGGKKKIV).

This sequence belongs to the eukaryotic ribosomal protein eS1 family. Component of the small ribosomal subunit. Mature ribosomes consist of a small (40S) and a large (60S) subunit. The 40S subunit contains about 33 different proteins and 1 molecule of RNA (18S). The 60S subunit contains about 49 different proteins and 3 molecules of RNA (25S, 5.8S and 5S).

The protein resides in the cytoplasm. The protein is Small ribosomal subunit protein eS1 of Syntrichia ruralis (Great hairy screw-moss).